The primary structure comprises 140 residues: Anti-sigma F factor (140 aa).

The protein belongs to the anti-sigma-factor family.

It carries out the reaction L-seryl-[protein] + ATP = O-phospho-L-seryl-[protein] + ADP + H(+). The enzyme catalyses L-threonyl-[protein] + ATP = O-phospho-L-threonyl-[protein] + ADP + H(+). Functionally, binds to sigma F and blocks its ability to form an RNA polymerase holoenzyme (E-sigma F). Phosphorylates SpoIIAA on a serine residue. This phosphorylation may enable SpoIIAA to act as an anti-anti-sigma factor that counteracts SpoIIAB and thus releases sigma F from inhibition. The sequence is that of Anti-sigma F factor from Clostridium perfringens (strain SM101 / Type A).